The sequence spans 128 residues: Probable cystatin-15 (128 aa).

An N-terminal signal peptide occupies residues 1–20; sequence MFWKLPLLLGLLALGPHVCS. A disulfide bridge connects residues C82 and C92. N-linked (GlcNAc...) asparagine glycosylation is present at N104. Residues C105 and C125 are joined by a disulfide bond.

This sequence belongs to the cystatin family.

It localises to the secreted. The polypeptide is Probable cystatin-15 (Bos taurus (Bovine)).